A 169-amino-acid chain; its full sequence is Peptide methionine sulfoxide reductase MsrA (169 aa).

Cys10 is an active-site residue.

This sequence belongs to the MsrA Met sulfoxide reductase family.

It catalyses the reaction L-methionyl-[protein] + [thioredoxin]-disulfide + H2O = L-methionyl-(S)-S-oxide-[protein] + [thioredoxin]-dithiol. The catalysed reaction is [thioredoxin]-disulfide + L-methionine + H2O = L-methionine (S)-S-oxide + [thioredoxin]-dithiol. Its function is as follows. Has an important function as a repair enzyme for proteins that have been inactivated by oxidation. Catalyzes the reversible oxidation-reduction of methionine sulfoxide in proteins to methionine. The chain is Peptide methionine sulfoxide reductase MsrA from Streptococcus equi subsp. zooepidemicus (strain MGCS10565).